The following is a 195-amino-acid chain: Fe/S biogenesis protein NfuA (195 aa).

2 residues coordinate [4Fe-4S] cluster: C152 and C155.

Belongs to the NfuA family. In terms of assembly, homodimer. [4Fe-4S] cluster is required as a cofactor.

Involved in iron-sulfur cluster biogenesis. Binds a 4Fe-4S cluster, can transfer this cluster to apoproteins, and thereby intervenes in the maturation of Fe/S proteins. Could also act as a scaffold/chaperone for damaged Fe/S proteins. This is Fe/S biogenesis protein NfuA from Vibrio cholerae serotype O1 (strain ATCC 39541 / Classical Ogawa 395 / O395).